Reading from the N-terminus, the 417-residue chain is MAEIRNFTLNFGPQHPAAHGVLRLVLEMDGEIIQRADPHVGLLHRATEKLAESKPFNQSIGYMDRLDYVSMMCNEHGYVKAIETLLGIEPPLRAQYIRTMFDEITRILNHLMWLGAHGLDIGAMTVFLYCFREREDLMDCYEAVSGARMHATYYRPGGVYRDLPETMPGYQPSKWHNEKEVAIINRNREGSLLDFIEDFTARFPTCVDEYETLLTDNRIWKQRTVGIGVVTPERALQLGFTGPMLRGSGVEWDLRKKQPYAAYDQIDFDIPVGVNGDCYDRYLVRIEEMRQSNQIIKQCVDWLRKNPGPVIVNNYKVAAPPREKMKNDMEVLIHHFKLFTEGYCVPEGEAYAAVEAPKGEFGVYLISDGANKPYRLKVRAPGFAHLAAMDEMVQGHMLADVVAIIGTMDIVFGEIDR.

This sequence belongs to the complex I 49 kDa subunit family. NDH-1 is composed of 14 different subunits. Subunits NuoB, C, D, E, F, and G constitute the peripheral sector of the complex.

The protein localises to the cell inner membrane. It carries out the reaction a quinone + NADH + 5 H(+)(in) = a quinol + NAD(+) + 4 H(+)(out). In terms of biological role, NDH-1 shuttles electrons from NADH, via FMN and iron-sulfur (Fe-S) centers, to quinones in the respiratory chain. The immediate electron acceptor for the enzyme in this species is believed to be ubiquinone. Couples the redox reaction to proton translocation (for every two electrons transferred, four hydrogen ions are translocated across the cytoplasmic membrane), and thus conserves the redox energy in a proton gradient. The sequence is that of NADH-quinone oxidoreductase subunit D from Nitrosococcus oceani (strain ATCC 19707 / BCRC 17464 / JCM 30415 / NCIMB 11848 / C-107).